We begin with the raw amino-acid sequence, 601 residues long: MSISIRKKNFCIIAHIDHGKSTLADRFIQKAKIISDRDFKSQMLDSMEIERERGITIKSQVVTITYKSNDGDCYELNFVDTPGHVDFSYEVSRAISSCEGALLLIDASQGIQAQTVSNFYMAFEHDLEIIPVINKIDLPNANIDFVKKQIKNDLGLNEEIAISISAKNGIGIDDLLEAICKHVPSPRGSIKDPLRALIFDSHYDSYRGVVVHFRIFEGQIKTGDKIRLMHTNSEHLIEEIGVFKISLERKDRLEAGDVGYFIAGIKNISDVKIGDTVTLCDCPALSPLEGFKEVKPVVFSSVYPVDANQYDDLLKAMDRLKLNDASLTFEKDSSSALGHGFKCGFLGLLHLEVIQERIEREFDLNVILTSPSVRYKIIPKKGESYFIESPEQFHGNEAIEGVLEPYIRANIIVPTEFLGNIMSVCLLKRGVQTSLIYLDTKRVELIYKMPLSEILFDFYDKIKSVSRGYASFDYELLDYEYTDLVRLDILVNGDRVDALSQLVFKDSAKTKAIGICKKLKDEIARQQFKIAIQGAIGSNVIARETISPVRKDVTAKCYGGDITRKRKLLEKQKEGKKRMKMVGNVEIPQRAFLAVLKSNDN.

Positions 5–187 (IRKKNFCIIA…AICKHVPSPR (183 aa)) constitute a tr-type G domain. Residues 17–22 (DHGKST) and 134–137 (NKID) each bind GTP.

It belongs to the TRAFAC class translation factor GTPase superfamily. Classic translation factor GTPase family. LepA subfamily.

The protein resides in the cell inner membrane. The catalysed reaction is GTP + H2O = GDP + phosphate + H(+). Its function is as follows. Required for accurate and efficient protein synthesis under certain stress conditions. May act as a fidelity factor of the translation reaction, by catalyzing a one-codon backward translocation of tRNAs on improperly translocated ribosomes. Back-translocation proceeds from a post-translocation (POST) complex to a pre-translocation (PRE) complex, thus giving elongation factor G a second chance to translocate the tRNAs correctly. Binds to ribosomes in a GTP-dependent manner. The chain is Elongation factor 4 from Borrelia garinii subsp. bavariensis (strain ATCC BAA-2496 / DSM 23469 / PBi) (Borreliella bavariensis).